The chain runs to 357 residues: Uroporphyrinogen decarboxylase (357 aa).

Residues 30-34 (RQAGR), aspartate 79, tyrosine 154, serine 209, and histidine 336 contribute to the substrate site.

This sequence belongs to the uroporphyrinogen decarboxylase family. As to quaternary structure, homodimer.

The protein localises to the cytoplasm. The enzyme catalyses uroporphyrinogen III + 4 H(+) = coproporphyrinogen III + 4 CO2. It functions in the pathway porphyrin-containing compound metabolism; protoporphyrin-IX biosynthesis; coproporphyrinogen-III from 5-aminolevulinate: step 4/4. Catalyzes the decarboxylation of four acetate groups of uroporphyrinogen-III to yield coproporphyrinogen-III. In Mycobacterium bovis (strain ATCC BAA-935 / AF2122/97), this protein is Uroporphyrinogen decarboxylase.